A 150-amino-acid chain; its full sequence is Arginine repressor (150 aa).

It belongs to the ArgR family.

It is found in the cytoplasm. It functions in the pathway amino-acid biosynthesis; L-arginine biosynthesis [regulation]. Its function is as follows. Regulates arginine biosynthesis genes. This chain is Arginine repressor, found in Thermoanaerobacter sp. (strain X514).